We begin with the raw amino-acid sequence, 200 residues long: Ribosome maturation factor RimM (200 aa).

Residues 103 to 181 (KEGEYYFYQL…KIVAKRLEYL (79 aa)) form the PRC barrel domain.

This sequence belongs to the RimM family. In terms of assembly, binds ribosomal protein uS19.

It is found in the cytoplasm. Its function is as follows. An accessory protein needed during the final step in the assembly of 30S ribosomal subunit, possibly for assembly of the head region. Essential for efficient processing of 16S rRNA. May be needed both before and after RbfA during the maturation of 16S rRNA. It has affinity for free ribosomal 30S subunits but not for 70S ribosomes. This Kosmotoga olearia (strain ATCC BAA-1733 / DSM 21960 / TBF 19.5.1) protein is Ribosome maturation factor RimM.